Reading from the N-terminus, the 948-residue chain is Valine--tRNA ligase (948 aa).

The short motif at 40–50 (PNVTGSLHMGH) is the 'HIGH' region element. Residues 551 to 555 (KMSKS) carry the 'KMSKS' region motif. Lys554 is a binding site for ATP. A coiled-coil region spans residues 879–945 (LIDKGAELAR…GKLAEQHARI (67 aa)).

It belongs to the class-I aminoacyl-tRNA synthetase family. ValS type 1 subfamily. In terms of assembly, monomer.

Its subcellular location is the cytoplasm. It catalyses the reaction tRNA(Val) + L-valine + ATP = L-valyl-tRNA(Val) + AMP + diphosphate. Catalyzes the attachment of valine to tRNA(Val). As ValRS can inadvertently accommodate and process structurally similar amino acids such as threonine, to avoid such errors, it has a 'posttransfer' editing activity that hydrolyzes mischarged Thr-tRNA(Val) in a tRNA-dependent manner. This is Valine--tRNA ligase from Pseudomonas syringae pv. syringae (strain B728a).